Here is a 625-residue protein sequence, read N- to C-terminus: Grainyhead-like protein 2 homolog (625 aa).

Disordered regions lie at residues 1–24 (MSQE…PPFN), 82–112 (VSKA…GGEN), and 428–453 (EERK…SDGK). The tract at residues 1-93 (MSQESDNNKR…KASDSQEDQE (93 aa)) is transcription activation. 2 stretches are compositionally biased toward polar residues: residues 98–109 (LGTSEAQSNLSG) and 440–451 (QASQTQCNSSSD). The Grh/CP2 DB domain occupies 244–482 (SSGTFQYTLE…DLHSQPVLFI (239 aa)).

The protein belongs to the grh/CP2 family. Grainyhead subfamily. In terms of assembly, homodimer, also forms heterodimers with GRHL1 or GRHL3. As to expression, expressed in keratinocytes (at protein level). Highly expressed in placenta, prostate, brain and kidney. Lower-level expression in a variety of epithelial tissues such as thymus, lung, salivary gland, mammary gland and digestive tract. Expressed in the cochlear. Expressed in corneal epithelial cells, but not in the endothelium or stroma.

The protein localises to the nucleus. Its subcellular location is the membrane. Functionally, transcription factor playing an important role in primary neurulation and in epithelial development. Binds directly to the consensus DNA sequence 5'-AACCGGTT-3' acting as an activator and repressor on distinct target genes. During embryogenesis, plays unique and cooperative roles with GRHL3 in establishing distinct zones of primary neurulation. Essential for closure 3 (rostral end of the forebrain), functions cooperatively with GRHL3 in closure 2 (forebrain/midbrain boundary) and posterior neuropore closure. Regulates epithelial morphogenesis acting as a target gene-associated transcriptional activator of apical junctional complex components. Up-regulates of CLDN3 and CLDN4, as well as of RAB25, which increases the CLDN4 protein and its localization at tight junctions. Comprises an essential component of the transcriptional machinery that establishes appropriate expression levels of CLDN4 and CDH1 in different types of epithelia. Exhibits functional redundancy with GRHL3 in epidermal morphogenetic events and epidermal wound repair. In lung, forms a regulatory loop with NKX2-1 that coordinates lung epithelial cell morphogenesis and differentiation. In keratinocytes, plays a role in telomerase activation during cellular proliferation, regulates TERT expression by binding to TERT promoter region and inhibiting DNA methylation at the 5'-CpG island, possibly by interfering with DNMT1 enzyme activity. In addition, impairs keratinocyte differentiation and epidermal function by inhibiting the expression of genes clustered at the epidermal differentiation complex (EDC) as well as GRHL1 and GRHL3 through epigenetic mechanisms. The chain is Grainyhead-like protein 2 homolog (GRHL2) from Homo sapiens (Human).